The following is a 49-amino-acid chain: Large ribosomal subunit protein bL33B (49 aa).

It belongs to the bacterial ribosomal protein bL33 family.

The polypeptide is Large ribosomal subunit protein bL33B (rpmG2) (Staphylococcus epidermidis (strain ATCC 12228 / FDA PCI 1200)).